A 112-amino-acid chain; its full sequence is Low molecular weight protein antigen 6 (112 aa).

It is found in the secreted. In Mycobacterium bovis (strain ATCC BAA-935 / AF2122/97), this protein is Low molecular weight protein antigen 6 (cfp6).